The sequence spans 122 residues: NADH-quinone oxidoreductase subunit A (122 aa).

The next 3 membrane-spanning stretches (helical) occupy residues 10 to 30 (MIVG…LTLG), 66 to 86 (IFAL…PWAV), and 91 to 111 (LGLF…IGLA).

This sequence belongs to the complex I subunit 3 family. NDH-1 is composed of 14 different subunits. Subunits NuoA, H, J, K, L, M, N constitute the membrane sector of the complex.

Its subcellular location is the cell membrane. The catalysed reaction is a quinone + NADH + 5 H(+)(in) = a quinol + NAD(+) + 4 H(+)(out). NDH-1 shuttles electrons from NADH, via FMN and iron-sulfur (Fe-S) centers, to quinones in the respiratory chain. The immediate electron acceptor for the enzyme in this species is believed to be a menaquinone. Couples the redox reaction to proton translocation (for every two electrons transferred, four hydrogen ions are translocated across the cytoplasmic membrane), and thus conserves the redox energy in a proton gradient. This is NADH-quinone oxidoreductase subunit A from Bacillus cytotoxicus (strain DSM 22905 / CIP 110041 / 391-98 / NVH 391-98).